A 394-amino-acid polypeptide reads, in one-letter code: MAKAKFERNKPHVNVGTIGHVDHGKTTLTAAISHVLAKTYGGEAKDFSQIDNAPEERERGITINTSHIEYDTPTRHYAHVDCPGHADYVKNMITGAAQMDGAILVVASTDGPMPQTREHILLSRQVGVPFIIVFMNKCDMVDDAELLELVEMEVRELLSEYDFPGDDLPVIQGSALKALEGEPEWEAKIIELAAALDSYIPEPERDIDKPFLMPIEDVFSISGRGTVVTGRVERGIVRVGDEVEIVGIRTTTKTTCTGVEMFRKLLDEGRAGENCGILLRGTKRDDVERGQVLSKPGSINPHTTFESEVYVLSKEEGGRHTPFFKGYRPQFYFRTTDVTGTIELPEGVEMVMPGDNIKMVVTLICPIAMDEGLRFAIREGGRTVGAGVVAKIIA.

Residues 10 to 204 form the tr-type G domain; that stretch reads KPHVNVGTIG…ALDSYIPEPE (195 aa). The tract at residues 19-26 is G1; that stretch reads GHVDHGKT. Residue 19–26 coordinates GTP; the sequence is GHVDHGKT. Threonine 26 serves as a coordination point for Mg(2+). The segment at 60-64 is G2; that stretch reads GITIN. The interval 81–84 is G3; it reads DCPG. GTP contacts are provided by residues 81 to 85 and 136 to 139; these read DCPGH and NKCD. The G4 stretch occupies residues 136–139; that stretch reads NKCD. The segment at 174 to 176 is G5; it reads SAL.

Belongs to the TRAFAC class translation factor GTPase superfamily. Classic translation factor GTPase family. EF-Tu/EF-1A subfamily. In terms of assembly, monomer.

It localises to the cytoplasm. It catalyses the reaction GTP + H2O = GDP + phosphate + H(+). Its function is as follows. GTP hydrolase that promotes the GTP-dependent binding of aminoacyl-tRNA to the A-site of ribosomes during protein biosynthesis. In Shewanella sp. (strain MR-4), this protein is Elongation factor Tu 2.